Consider the following 344-residue polypeptide: 5-formaminoimidazole-4-carboxamide-1-(beta)-D-ribofuranosyl 5'-monophosphate synthetase (344 aa).

5-amino-1-(5-phospho-beta-D-ribosyl)imidazole-4-carboxamide contacts are provided by His31 and Ser96. The region spanning Met130–Glu324 is the ATP-grasp domain. ATP is bound by residues Pro153 to Tyr198 and Glu220. Asn240 contributes to the 5-amino-1-(5-phospho-beta-D-ribosyl)imidazole-4-carboxamide binding site. Mg(2+) contacts are provided by Glu279 and Glu292.

The protein belongs to the phosphohexose mutase family. It depends on Mg(2+) as a cofactor. Mn(2+) serves as cofactor.

The enzyme catalyses 5-amino-1-(5-phospho-beta-D-ribosyl)imidazole-4-carboxamide + formate + ATP = 5-formamido-1-(5-phospho-D-ribosyl)imidazole-4-carboxamide + ADP + phosphate. It functions in the pathway purine metabolism; IMP biosynthesis via de novo pathway; 5-formamido-1-(5-phospho-D-ribosyl)imidazole-4-carboxamide from 5-amino-1-(5-phospho-D-ribosyl)imidazole-4-carboxamide (formate route): step 1/1. Catalyzes the ATP- and formate-dependent formylation of 5-aminoimidazole-4-carboxamide-1-beta-d-ribofuranosyl 5'-monophosphate (AICAR) to 5-formaminoimidazole-4-carboxamide-1-beta-d-ribofuranosyl 5'-monophosphate (FAICAR) in the absence of folates. The sequence is that of 5-formaminoimidazole-4-carboxamide-1-(beta)-D-ribofuranosyl 5'-monophosphate synthetase from Pyrobaculum neutrophilum (strain DSM 2338 / JCM 9278 / NBRC 100436 / V24Sta) (Thermoproteus neutrophilus).